A 392-amino-acid chain; its full sequence is Alpha-(1,3)-fucosyltransferase fut-6 (392 aa).

Over 1-12 (MSQIGGATCTWR) the chain is Cytoplasmic. Residues 13–35 (YLGRFVTLGIYASVALFVWYTLV) form a helical; Signal-anchor for type II membrane protein membrane-spanning segment. Residues 36-392 (PTRSKHKDSI…CNNQIASKYL (357 aa)) are Lumenal-facing. Asn158 carries an N-linked (GlcNAc...) asparagine glycan.

Belongs to the glycosyltransferase 10 family. Unlike other alpha-(1,3)-fucosyltransferases, appears not to require a divalent metal cation as cofactor. serves as cofactor.

The protein localises to the golgi apparatus. Its subcellular location is the golgi stack membrane. It participates in protein modification; protein glycosylation. Inhibited by divalent metal cations. In terms of biological role, involved in the fucosylation of N-glycans. Preferentially catalyzes the addition of fucose in alpha 1-3 linkage to the distal GlcNAc residue in N-glycans. Catalyzes the transfer of fucose to Gal-beta-1-4-GlcNAc-alpha-pNP (LN-pNP) and Gal-beta-1-4-GlcNAc-beta-1-3-Gal-beta-1-4-Glc (LNnT). Unlike alpha-(1,3)-fucosyltransferase fut-1, does not transfer fucose to Man-alpha-1-3-(Man-alpha-1-6)-Man-beta-1-4-GlcNAc-beta-1-4-GlcNAc-beta-1-Asn (M3), Man-alpha-1-3-(Man-alpha-1-6)-Man-beta-1-4-GlcNAc-beta-1-4-(Fuc-alpha-1-6)-GlcNAc-beta-1-Asn (M3F6) and GlcNAc-beta-1-2-Man-alpha-1-3-(GlcNAc-beta-1-2-Man-alpha-1-6)-Man-beta-1-4-GlcNAc-beta-1-4(Fuc-alpha-1-6)-GlcNAc-beta-1-Asn (GnM3F6). The polypeptide is Alpha-(1,3)-fucosyltransferase fut-6 (Caenorhabditis elegans).